Here is a 339-residue protein sequence, read N- to C-terminus: Glycerol-3-phosphate dehydrogenase [NAD(P)+] (339 aa).

NADPH-binding residues include S11, W12, and K109. The sn-glycerol 3-phosphate site is built by K109, G140, and S142. A144 is an NADPH binding site. The sn-glycerol 3-phosphate site is built by K195, D249, S259, R260, and N261. K195 serves as the catalytic Proton acceptor. Residue R260 participates in NADPH binding. Positions 284 and 286 each coordinate NADPH.

The protein belongs to the NAD-dependent glycerol-3-phosphate dehydrogenase family.

It is found in the cytoplasm. It carries out the reaction sn-glycerol 3-phosphate + NAD(+) = dihydroxyacetone phosphate + NADH + H(+). It catalyses the reaction sn-glycerol 3-phosphate + NADP(+) = dihydroxyacetone phosphate + NADPH + H(+). It functions in the pathway membrane lipid metabolism; glycerophospholipid metabolism. Catalyzes the reduction of the glycolytic intermediate dihydroxyacetone phosphate (DHAP) to sn-glycerol 3-phosphate (G3P), the key precursor for phospholipid synthesis. The polypeptide is Glycerol-3-phosphate dehydrogenase [NAD(P)+] (Lactobacillus johnsonii (strain CNCM I-12250 / La1 / NCC 533)).